Here is an 880-residue protein sequence, read N- to C-terminus: Valine--tRNA ligase (880 aa).

A 'HIGH' region motif is present at residues 48–58 (PNITGKLHLGH). Positions 527–531 (KMSKS) match the 'KMSKS' region motif. Position 530 (K530) interacts with ATP. 2 coiled-coil regions span residues 717 to 741 (KEEL…AIRN) and 810 to 880 (LFDL…KSLK).

This sequence belongs to the class-I aminoacyl-tRNA synthetase family. ValS type 1 subfamily. Monomer.

Its subcellular location is the cytoplasm. The enzyme catalyses tRNA(Val) + L-valine + ATP = L-valyl-tRNA(Val) + AMP + diphosphate. Its function is as follows. Catalyzes the attachment of valine to tRNA(Val). As ValRS can inadvertently accommodate and process structurally similar amino acids such as threonine, to avoid such errors, it has a 'posttransfer' editing activity that hydrolyzes mischarged Thr-tRNA(Val) in a tRNA-dependent manner. The polypeptide is Valine--tRNA ligase (Clostridium tetani (strain Massachusetts / E88)).